Here is a 365-residue protein sequence, read N- to C-terminus: Alanine racemase (365 aa).

K32 acts as the Proton acceptor; specific for D-alanine in catalysis. The residue at position 32 (K32) is an N6-(pyridoxal phosphate)lysine. R128 contacts substrate. The active-site Proton acceptor; specific for L-alanine is the Y257. M305 contributes to the substrate binding site.

The protein belongs to the alanine racemase family. The cofactor is pyridoxal 5'-phosphate.

It carries out the reaction L-alanine = D-alanine. It participates in amino-acid biosynthesis; D-alanine biosynthesis; D-alanine from L-alanine: step 1/1. Its function is as follows. Catalyzes the interconversion of L-alanine and D-alanine. May also act on other amino acids. The protein is Alanine racemase (alr) of Francisella tularensis subsp. tularensis (strain WY96-3418).